The sequence spans 302 residues: Bifunctional protein FolD (302 aa).

Residues 165-167, serine 190, and isoleucine 231 contribute to the NADP(+) site; that span reads GRS.

The protein belongs to the tetrahydrofolate dehydrogenase/cyclohydrolase family. Homodimer.

It catalyses the reaction (6R)-5,10-methylene-5,6,7,8-tetrahydrofolate + NADP(+) = (6R)-5,10-methenyltetrahydrofolate + NADPH. The enzyme catalyses (6R)-5,10-methenyltetrahydrofolate + H2O = (6R)-10-formyltetrahydrofolate + H(+). It participates in one-carbon metabolism; tetrahydrofolate interconversion. Its function is as follows. Catalyzes the oxidation of 5,10-methylenetetrahydrofolate to 5,10-methenyltetrahydrofolate and then the hydrolysis of 5,10-methenyltetrahydrofolate to 10-formyltetrahydrofolate. The chain is Bifunctional protein FolD from Prochlorococcus marinus (strain MIT 9303).